Consider the following 104-residue polypeptide: Nucleoid-associated protein LSL_1227 (104 aa).

The span at 1–19 shows a compositional bias: low complexity; the sequence is MMMRGMNMQSMMKQMQKLQ. The interval 1 to 24 is disordered; sequence MMMRGMNMQSMMKQMQKLQKNMKK.

Belongs to the YbaB/EbfC family. As to quaternary structure, homodimer.

The protein localises to the cytoplasm. It localises to the nucleoid. Functionally, binds to DNA and alters its conformation. May be involved in regulation of gene expression, nucleoid organization and DNA protection. The chain is Nucleoid-associated protein LSL_1227 from Ligilactobacillus salivarius (strain UCC118) (Lactobacillus salivarius).